Here is a 381-residue protein sequence, read N- to C-terminus: Sulfate/thiosulfate import ATP-binding protein CysA (381 aa).

In terms of domain architecture, ABC transporter spans 3-233; the sequence is ILVYEVSKSL…PIDYFVGIFS (231 aa). 35–42 contributes to the ATP binding site; it reads GPSGSGKS.

Belongs to the ABC transporter superfamily. Sulfate/tungstate importer (TC 3.A.1.6) family.

The protein localises to the plastid. Its subcellular location is the chloroplast. The enzyme catalyses sulfate(out) + ATP + H2O = sulfate(in) + ADP + phosphate + H(+). It catalyses the reaction thiosulfate(out) + ATP + H2O = thiosulfate(in) + ADP + phosphate + H(+). Functionally, part of the ABC transporter complex involved in sulfate/thiosulfate import. Responsible for energy coupling to the transport system. In Anthoceros angustus (Hornwort), this protein is Sulfate/thiosulfate import ATP-binding protein CysA.